Reading from the N-terminus, the 1465-residue chain is MSELFKKLMDQIEMPLEMKNSRVFSSADIVEVKVYPESRIWDFRFSFETILPIDFYQELRSRLVTSFETADIKAVFDIEVENAEFSNELLQAYYQEAFKQPTCNSASFKSSFSHLTVSYTDGKVLISAPQFVNNDHFRKNHLPNLEKQFEAFGFGKLSFDIVSNQKMTEEIKHHFESSRQQQIQKASQETLEIQKSLEASIPPEEIPKPVSNFKERIKDRQAAFEKAEITPMAEIETEENRITFEGLVFDVERKTTRTGRHIINFKMTDYTSSFPMQKWAKDDEELKKYDMISKGAWLRVRGNIENNPFTKALTMNVQNVKTIVHKERKDLMPQGEKRVEFHAHTNMSTMDALPTVEQLVAKAAQFGHPAVAITDHGNVQSFPHGYHAGKKNGIKVLFGLEANLVEDRVPIVYNEVDMDMNEATYVVFDVETTGLSAINNDLIQIAASKMHKGNIVEQFDEFIDPGHPLSQFTTDLTGITDQHVKGAKPISQVLQEFQSFCQDTVLVAHNATFDVGFMNANYERHDLPKITQPVIDTLEFARNLYPEYKRHGLGPLTKRFQVSLEHHHMANYDAEATGRLLFIFLKEAKEKHGVNNLLDLNTKIVDDNSYKKARVKHATIYVLNQKGLKNLFKLVSLSNVTYFAGVARIPRTILDQYRDGLLLGTACSDGEVFDTVLSKGVEDAVEVAKYYDFIEVMPPALYEPLLARELIKDEAGIQQIIKDLIEVGRRLDKPVLATGDVHYLEPEDEIYREIIVRSLGQGAMINRPIGRGENAQPAPLPKAHFRTTNEMLDEFAFLGEDLARDIVIKNPNEMVERFEDVEVVKTDLYTPFIENSEEKVAEMTYEKAFEIYGNPLPDIIDLRIEKELTSILGNGFAVIYLASQMLVNRSNERGYLVGSRGSVGSSFVATMIGITEVNPMPPHYICPNPDCKHSEFITDGSVGSGYDLPDKICSECGTPYKKDGQDIPFETFLGFDGDKVPDIDLNFSGDDQPSAHLDVRDIFGEEYAFRAGTVGTVADRTAYGFVKGYERDYGKFYRDAEVDRLAQGSAGVKRTTGQHPGGIVVIPNYMDVYDFTPVQYPADDLTAEWQTTHFNFHDIDENVLKLDVLGHDDPTMIRKLQDLSGIDPKTIPADDPEVMKLFSGTEVLGVTEEEIGTPTGMLGIPEFGTNFVRGMVDETHPTTFAELLQLSGLSHGTDVWLGNAQDLIKQGIATLSTVIGCRDDIMVYLMHAGLEPKMAFTIMERVRKGAWLKISEEERNGYISAMRENNVPDWYIESCGKIKYMFPKAHAAAYVLMALRVAYFKVHHPIYYYCAYFSIRAKAFELKTMSAGLDAVKARMADISQKRKINQASNVEIDLFTTLEIVNEMLERGFKFGQLDLYRSDATEFIIDGDTLIPPFVALEGLGENVAKQIVKARNEGEFLSKTELRKRGGLSSTLVEKMSDMGILGSMPEDNQLSLFDDFF.

Positions 425-581 (YVVFDVETTG…YDAEATGRLL (157 aa)) constitute an Exonuclease domain.

The protein belongs to the DNA polymerase type-C family. PolC subfamily.

Its subcellular location is the cytoplasm. The catalysed reaction is DNA(n) + a 2'-deoxyribonucleoside 5'-triphosphate = DNA(n+1) + diphosphate. Its function is as follows. Required for replicative DNA synthesis. This DNA polymerase also exhibits 3' to 5' exonuclease activity. The sequence is that of DNA polymerase III PolC-type from Streptococcus mutans serotype c (strain ATCC 700610 / UA159).